Consider the following 521-residue polypeptide: GMP synthase [glutamine-hydrolyzing] (521 aa).

The region spanning Lys-8 to Leu-203 is the Glutamine amidotransferase type-1 domain. Residue Cys-85 is the Nucleophile of the active site. Residues His-177 and Glu-179 contribute to the active site. A GMPS ATP-PPase domain is found at Trp-204–Arg-396. Ser-231 to Ser-237 contributes to the ATP binding site.

Homodimer.

It carries out the reaction XMP + L-glutamine + ATP + H2O = GMP + L-glutamate + AMP + diphosphate + 2 H(+). It participates in purine metabolism; GMP biosynthesis; GMP from XMP (L-Gln route): step 1/1. Catalyzes the synthesis of GMP from XMP. The protein is GMP synthase [glutamine-hydrolyzing] of Xanthomonas axonopodis pv. citri (strain 306).